Here is a 224-residue protein sequence, read N- to C-terminus: Flagellar L-ring protein (224 aa).

The first 15 residues, 1 to 15 (MKWYLVALSGLLLSG), serve as a signal peptide directing secretion. A lipid anchor (N-palmitoyl cysteine) is attached at Cys16. Residue Cys16 is the site of S-diacylglycerol cysteine attachment.

This sequence belongs to the FlgH family. As to quaternary structure, the basal body constitutes a major portion of the flagellar organelle and consists of four rings (L,P,S, and M) mounted on a central rod.

The protein resides in the cell outer membrane. It is found in the bacterial flagellum basal body. Functionally, assembles around the rod to form the L-ring and probably protects the motor/basal body from shearing forces during rotation. The protein is Flagellar L-ring protein of Trichlorobacter lovleyi (strain ATCC BAA-1151 / DSM 17278 / SZ) (Geobacter lovleyi).